The sequence spans 276 residues: Undecaprenyl-diphosphatase (276 aa).

8 consecutive transmembrane segments (helical) span residues 1–21 (MSWL…FLPV), 39–59 (AGAS…LVYF), 84–104 (YWLG…GLLF), 115–135 (LWLV…AEYA), 159–179 (LALV…LFLG), 190–210 (FLLA…DAFA), 222–242 (QLLV…AWFL), and 253–273 (FVGY…TGVV).

The protein belongs to the UppP family.

It localises to the cell membrane. It carries out the reaction di-trans,octa-cis-undecaprenyl diphosphate + H2O = di-trans,octa-cis-undecaprenyl phosphate + phosphate + H(+). Functionally, catalyzes the dephosphorylation of undecaprenyl diphosphate (UPP). Confers resistance to bacitracin. This Mycolicibacterium gilvum (strain PYR-GCK) (Mycobacterium gilvum (strain PYR-GCK)) protein is Undecaprenyl-diphosphatase.